The following is a 356-amino-acid chain: NADH-quinone oxidoreductase subunit H (356 aa).

8 helical membrane passes run 18–38, 87–107, 120–140, 166–186, 202–222, 257–277, 292–312, and 333–353; these read IVMV…IAYI, GVFL…WAVI, VGIL…IMGG, IGFV…SAIV, WLTF…VFYV, LFML…AILF, WVPG…LIAM, and FLPL…FAGI.

The protein belongs to the complex I subunit 1 family. In terms of assembly, NDH-1 is composed of 14 different subunits. Subunits NuoA, H, J, K, L, M, N constitute the membrane sector of the complex.

Its subcellular location is the cell inner membrane. It catalyses the reaction a quinone + NADH + 5 H(+)(in) = a quinol + NAD(+) + 4 H(+)(out). NDH-1 shuttles electrons from NADH, via FMN and iron-sulfur (Fe-S) centers, to quinones in the respiratory chain. The immediate electron acceptor for the enzyme in this species is believed to be ubiquinone. Couples the redox reaction to proton translocation (for every two electrons transferred, four hydrogen ions are translocated across the cytoplasmic membrane), and thus conserves the redox energy in a proton gradient. This subunit may bind ubiquinone. This is NADH-quinone oxidoreductase subunit H from Nitrobacter winogradskyi (strain ATCC 25391 / DSM 10237 / CIP 104748 / NCIMB 11846 / Nb-255).